Reading from the N-terminus, the 173-residue chain is Protein Rv3753c (173 aa).

In Mycobacterium tuberculosis (strain ATCC 25618 / H37Rv), this protein is Protein Rv3753c.